The following is a 715-amino-acid chain: Probable serine/threonine-protein kinase MARK-B (715 aa).

Over residues 24–37 the composition is skewed to low complexity; it reads SCSSNSTTSSSSNS. The interval 24-65 is disordered; that stretch reads SCSSNSTTSSSSNSPKQNKVSPGYRNKPQQQQHKKGHKMGNY. The Protein kinase domain maps to 65 to 320; the sequence is YLLGKTIGSG…LDEIKTHVWV (256 aa). ATP-binding positions include 71–79 and Lys94; that span reads IGSGTSSKV. The active-site Proton acceptor is Asp187. A compositionally biased stretch (basic and acidic residues) spans 335–344; that stretch reads KVSDRLEKEQ. Disordered stretches follow at residues 335–399 and 446–530; these read KVSD…IPQN and CSAP…HHST. Residues 345 to 368 are compositionally biased toward low complexity; the sequence is QQQTPQHQQTQQQLQPQSQLQQHS. Residues 381–399 are compositionally biased toward polar residues; that stretch reads IGSNRPLNQSSPNLTIPQN. Low complexity-rich tracts occupy residues 451-478 and 487-513; these read SPHS…LSVS and SSNP…INTS. Residues 517-527 are compositionally biased toward basic residues; that stretch reads QYHHHHHHQNH. The 50-residue stretch at 666 to 715 folds into the KA1 domain; sequence LCPRNETINFEIEVCKVNGMDMYGIKFKRLSGDAWSYSSSCIKIVESLKL.

It belongs to the protein kinase superfamily. CAMK Ser/Thr protein kinase family. SNF1 subfamily.

The catalysed reaction is L-seryl-[protein] + ATP = O-phospho-L-seryl-[protein] + ADP + H(+). The enzyme catalyses L-threonyl-[protein] + ATP = O-phospho-L-threonyl-[protein] + ADP + H(+). In Dictyostelium discoideum (Social amoeba), this protein is Probable serine/threonine-protein kinase MARK-B (mrkB).